A 196-amino-acid chain; its full sequence is Large ribosomal subunit protein uL11m (196 aa).

It belongs to the universal ribosomal protein uL11 family. As to quaternary structure, component of the mitochondrial ribosome large subunit (39S) which comprises a 16S rRNA and about 50 distinct proteins.

Its subcellular location is the mitochondrion. This is Large ribosomal subunit protein uL11m (mRpL11) from Drosophila melanogaster (Fruit fly).